The following is a 263-amino-acid chain: Purine nucleoside phosphorylase SAR1163 (263 aa).

Positions 79, 124, and 141 each coordinate Zn(2+).

The protein belongs to the purine nucleoside phosphorylase YfiH/LACC1 family. As to quaternary structure, homodimer. Cu(2+) serves as cofactor. Requires Zn(2+) as cofactor.

It carries out the reaction adenosine + phosphate = alpha-D-ribose 1-phosphate + adenine. The catalysed reaction is S-methyl-5'-thioadenosine + phosphate = 5-(methylsulfanyl)-alpha-D-ribose 1-phosphate + adenine. It catalyses the reaction inosine + phosphate = alpha-D-ribose 1-phosphate + hypoxanthine. The enzyme catalyses adenosine + H2O + H(+) = inosine + NH4(+). In terms of biological role, purine nucleoside enzyme that catalyzes the phosphorolysis of adenosine and inosine nucleosides, yielding D-ribose 1-phosphate and the respective free bases, adenine and hypoxanthine. Also catalyzes the phosphorolysis of S-methyl-5'-thioadenosine into adenine and S-methyl-5-thio-alpha-D-ribose 1-phosphate. Also has adenosine deaminase activity. The chain is Purine nucleoside phosphorylase SAR1163 from Staphylococcus aureus (strain MRSA252).